The following is a 261-amino-acid chain: uncharacterized protein (261 aa).

The next 5 helical transmembrane spans lie at 38–58, 134–154, 163–183, 195–215, and 219–239; these read FIYLILGGFGFYQPSNLITLL, YTLMVSLVAIFQCLISLLALI, ILINLSLTLNFFLLLFNTYVL, YMGLIVSYIISLLDFSALFFL, and HKSVLSVISSIFSFFLMCLKV.

The protein localises to the membrane. This is an uncharacterized protein from Dictyostelium discoideum (Social amoeba).